Here is a 356-residue protein sequence, read N- to C-terminus: Phenylalanine--tRNA ligase alpha subunit (356 aa).

A Mg(2+)-binding site is contributed by E260.

Belongs to the class-II aminoacyl-tRNA synthetase family. Phe-tRNA synthetase alpha subunit type 1 subfamily. As to quaternary structure, tetramer of two alpha and two beta subunits. Mg(2+) is required as a cofactor.

It is found in the cytoplasm. It catalyses the reaction tRNA(Phe) + L-phenylalanine + ATP = L-phenylalanyl-tRNA(Phe) + AMP + diphosphate + H(+). This chain is Phenylalanine--tRNA ligase alpha subunit, found in Gluconobacter oxydans (strain 621H) (Gluconobacter suboxydans).